The primary structure comprises 80 residues: Exodeoxyribonuclease 7 small subunit (80 aa).

The protein belongs to the XseB family. In terms of assembly, heterooligomer composed of large and small subunits.

It is found in the cytoplasm. The enzyme catalyses Exonucleolytic cleavage in either 5'- to 3'- or 3'- to 5'-direction to yield nucleoside 5'-phosphates.. Its function is as follows. Bidirectionally degrades single-stranded DNA into large acid-insoluble oligonucleotides, which are then degraded further into small acid-soluble oligonucleotides. The protein is Exodeoxyribonuclease 7 small subunit of Streptomyces avermitilis (strain ATCC 31267 / DSM 46492 / JCM 5070 / NBRC 14893 / NCIMB 12804 / NRRL 8165 / MA-4680).